We begin with the raw amino-acid sequence, 450 residues long: tRNA modification GTPase MnmE (450 aa).

The (6S)-5-formyl-5,6,7,8-tetrahydrofolate site is built by R23, E79, and K118. In terms of domain architecture, TrmE-type G spans 214–374 (GITLILVGKP…LKDHILAKVG (161 aa)). Residue N224 coordinates K(+). GTP is bound by residues 224-229 (NAGKSS), 243-249 (TSIAGTT), and 268-271 (DTAG). Residue S228 participates in Mg(2+) binding. Positions 243, 245, and 248 each coordinate K(+). T249 provides a ligand contact to Mg(2+). Residue K450 participates in (6S)-5-formyl-5,6,7,8-tetrahydrofolate binding.

The protein belongs to the TRAFAC class TrmE-Era-EngA-EngB-Septin-like GTPase superfamily. TrmE GTPase family. As to quaternary structure, homodimer. Heterotetramer of two MnmE and two MnmG subunits. K(+) is required as a cofactor.

The protein resides in the cytoplasm. Functionally, exhibits a very high intrinsic GTPase hydrolysis rate. Involved in the addition of a carboxymethylaminomethyl (cmnm) group at the wobble position (U34) of certain tRNAs, forming tRNA-cmnm(5)s(2)U34. This is tRNA modification GTPase MnmE from Francisella philomiragia subsp. philomiragia (strain ATCC 25017 / CCUG 19701 / FSC 153 / O#319-036).